Here is a 490-residue protein sequence, read N- to C-terminus: Betaine aldehyde dehydrogenase (490 aa).

Ser-26, Ile-27, and Asp-93 together coordinate K(+). Position 150 to 152 (150 to 152 (GAW)) interacts with NAD(+). Lys-162 functions as the Charge relay system in the catalytic mechanism. Residues 176 to 179 (KPSE) and 230 to 233 (GVET) each bind NAD(+). Leu-246 contacts K(+). Residue Glu-252 is the Proton acceptor of the active site. Positions 254, 286, and 387 each coordinate NAD(+). Cys-286 acts as the Nucleophile in catalysis. Cys-286 carries the post-translational modification Cysteine sulfenic acid (-SOH). K(+) contacts are provided by Lys-457 and Gly-460. Glu-464 serves as the catalytic Charge relay system.

It belongs to the aldehyde dehydrogenase family. In terms of assembly, dimer of dimers. The cofactor is K(+).

The enzyme catalyses betaine aldehyde + NAD(+) + H2O = glycine betaine + NADH + 2 H(+). Its pathway is amine and polyamine biosynthesis; betaine biosynthesis via choline pathway; betaine from betaine aldehyde: step 1/1. Functionally, involved in the biosynthesis of the osmoprotectant glycine betaine. Catalyzes the irreversible oxidation of betaine aldehyde to the corresponding acid. In Acinetobacter baumannii (strain ACICU), this protein is Betaine aldehyde dehydrogenase.